A 394-amino-acid chain; its full sequence is Thioredoxin-interacting protein (394 aa).

Residue Lys212 forms a Glycyl lysine isopeptide (Lys-Gly) (interchain with G-Cter in ubiquitin) linkage. Ser361 is modified (phosphoserine).

It belongs to the arrestin family. Homodimer; disulfide-linked. Interacts with TXN/thioredoxin through its redox-active site. Interacts with transcriptional repressors ZBTB16, ZBTB32 and HDAC1. Interacts with DDIT4. Ubiquitinated; undergoes heterotypic 'Lys-48'-/'Lys-63'-branched polyubiquitination catalyzed by ITCH and UBR5 resulting in proteasomal degradation. Deubiquitinated by USP5, leading to TXNIP stabilization.

It is found in the cytoplasm. In terms of biological role, may act as an oxidative stress mediator by inhibiting thioredoxin activity or by limiting its bioavailability. Interacts with COPS5 and restores COPS5-induced suppression of CDKN1B stability, blocking the COPS5-mediated translocation of CDKN1B from the nucleus to the cytoplasm. Functions as a transcriptional repressor, possibly by acting as a bridge molecule between transcription factors and corepressor complexes, and over-expression will induce G0/G1 cell cycle arrest. Required for the maturation of natural killer cells. Acts as a suppressor of tumor cell growth. Inhibits the proteasomal degradation of DDIT4, and thereby contributes to the inhibition of the mammalian target of rapamycin complex 1 (mTORC1). This Rattus norvegicus (Rat) protein is Thioredoxin-interacting protein (Txnip).